The following is a 279-amino-acid chain: Digeranylgeranylglyceryl phosphate synthase (279 aa).

8 helical membrane-spanning segments follow: residues 14 to 34, 36 to 56, 94 to 114, 131 to 153, 157 to 175, 201 to 221, 224 to 244, and 259 to 279; these read VKNCLTASFGTIIGGLIASNF, FGLIGYILLASLIVFLVCGFG, LMISGIIISLFNMICFAIALI, IIGNLIVAYLTGSIFIFGGASVG, ITLILFLCALFATWSREII, IFVAIGFLLCSILLSPLPYIL, FGAPYLMAIMICNVLFILAVL, and SKYIKIIMNLVLLSFVIGSLM.

The protein belongs to the UbiA prenyltransferase family. DGGGP synthase subfamily. Mg(2+) is required as a cofactor.

The protein resides in the cell membrane. It carries out the reaction sn-3-O-(geranylgeranyl)glycerol 1-phosphate + (2E,6E,10E)-geranylgeranyl diphosphate = 2,3-bis-O-(geranylgeranyl)-sn-glycerol 1-phosphate + diphosphate. Its pathway is membrane lipid metabolism; glycerophospholipid metabolism. Prenyltransferase that catalyzes the transfer of the geranylgeranyl moiety of geranylgeranyl diphosphate (GGPP) to the C2 hydroxyl of (S)-3-O-geranylgeranylglyceryl phosphate (GGGP). This reaction is the second ether-bond-formation step in the biosynthesis of archaeal membrane lipids. The polypeptide is Digeranylgeranylglyceryl phosphate synthase (Methanococcus aeolicus (strain ATCC BAA-1280 / DSM 17508 / OCM 812 / Nankai-3)).